A 48-amino-acid polypeptide reads, in one-letter code: uncharacterized protein (48 aa).

This is an uncharacterized protein from Acidianus convivator (ABV).